The sequence spans 132 residues: Small ribosomal subunit protein uS8 (132 aa).

It belongs to the universal ribosomal protein uS8 family. As to quaternary structure, part of the 30S ribosomal subunit. Contacts proteins S5 and S12.

One of the primary rRNA binding proteins, it binds directly to 16S rRNA central domain where it helps coordinate assembly of the platform of the 30S subunit. The polypeptide is Small ribosomal subunit protein uS8 (Xylella fastidiosa (strain M12)).